A 77-amino-acid chain; its full sequence is Putative neurotoxin 1 (77 aa).

The signal sequence occupies residues 1 to 25 (MKAFIAILSIAIVLLLIVSIKETSA). A propeptide spanning residues 26–46 (KDCKQECVKRYTKGDLTNFLK) is cleaved from the precursor.

This sequence belongs to the scolopendra neurotoxin 3 family. Contains 2 disulfide bonds. Expressed by the venom gland.

It is found in the secreted. This is Putative neurotoxin 1 from Scolopendra mutilans (Chinese red-headed centipede).